Consider the following 658-residue polypeptide: Non-reducing end beta-L-arabinofuranosidase (658 aa).

Beta-L-arabinofuranose is bound by residues histidine 142, 192-194 (DGH), histidine 270, and glutamate 322. The Proton donor/acceptor role is filled by glutamate 322. Residues glutamate 338, cysteine 340, cysteine 417, and cysteine 418 each contribute to the Zn(2+) site. Cysteine 417 serves as the catalytic Nucleophile; S-glycosyl-cysteine intermediate.

This sequence belongs to the glycosyl hydrolase 127 family. In terms of assembly, homodimer in solution. It depends on Zn(2+) as a cofactor.

It carries out the reaction beta-L-arabinofuranosyl-(1-&gt;2)-beta-L-arabinofuranose + H2O = 2 beta-L-arabinofuranose. With respect to regulation, strongly inhibited in the presence of thiol modifiers, suggesting a crucial role for cysteine residues in catalysis. Slightly inhibited by EDTA. Its function is as follows. Beta-L-arabinofuranosidase that removes the beta-L-arabinofuranose residue from the non-reducing end of various substrates, including beta-L-arabinofuranosyl-hydroxyproline (Ara-Hyp), Ara-beta-1,2-Ara-beta-Hyp (Ara(2)-Hyp), Ara-beta-1,2-Ara-beta-1,2-Ara-beta-Hyp (Ara(3)-Hyp), and beta-L-arabinofuranosyl-(1-&gt;2)-1-O-methyl-beta-L-arabinofuranose. In the presence of 1-alkanols, shows transglycosylation activity, retaining the anomeric configuration of the arabinofuranose residue. This chain is Non-reducing end beta-L-arabinofuranosidase, found in Bifidobacterium longum subsp. longum (strain ATCC 15707 / DSM 20219 / JCM 1217 / NCTC 11818 / E194b).